The following is a 264-amino-acid chain: Tritrans,polycis-undecaprenyl-diphosphate synthase (geranylgeranyl-diphosphate specific) (264 aa).

D43 is a catalytic residue. Residue D43 participates in Mg(2+) binding. Substrate contacts are provided by residues 44-47 (GNRR), W48, H60, and 88-90 (STE). N91 (proton acceptor) is an active-site residue. Substrate contacts are provided by residues F92, R94, R213, and 219–221 (RIS). Residue E232 participates in Mg(2+) binding.

The protein belongs to the UPP synthase family. As to quaternary structure, homodimer. It depends on Mg(2+) as a cofactor.

It catalyses the reaction geranylgeranyl diphosphate + 7 isopentenyl diphosphate = tri-trans,hepta-cis-undecaprenyl diphosphate + 7 diphosphate. Functionally, catalyzes the sequential condensation of isopentenyl diphosphate (IPP) with geranylgeranyl diphosphate (GGPP) to yield (2Z,6Z,10Z,14Z,18Z,22Z,26Z,30E,34E,38E)-undecaprenyl diphosphate (tritrans,heptacis-UPP). It is probably the precursor of glycosyl carrier lipids. The polypeptide is Tritrans,polycis-undecaprenyl-diphosphate synthase (geranylgeranyl-diphosphate specific) (Thermococcus kodakarensis (strain ATCC BAA-918 / JCM 12380 / KOD1) (Pyrococcus kodakaraensis (strain KOD1))).